The sequence spans 354 residues: Histidinol-phosphate aminotransferase (354 aa).

Lysine 215 bears the N6-(pyridoxal phosphate)lysine mark.

This sequence belongs to the class-II pyridoxal-phosphate-dependent aminotransferase family. Histidinol-phosphate aminotransferase subfamily. In terms of assembly, homodimer. It depends on pyridoxal 5'-phosphate as a cofactor.

It carries out the reaction L-histidinol phosphate + 2-oxoglutarate = 3-(imidazol-4-yl)-2-oxopropyl phosphate + L-glutamate. It participates in amino-acid biosynthesis; L-histidine biosynthesis; L-histidine from 5-phospho-alpha-D-ribose 1-diphosphate: step 7/9. In Vesicomyosocius okutanii subsp. Calyptogena okutanii (strain HA), this protein is Histidinol-phosphate aminotransferase.